The sequence spans 506 residues: MVSSTTPSSGEYLLEMSGINKSFPGVKALDNVNLKVRPHSIHALMGENGAGKSTLLKCLFGIYQKDSGTILFQGKEIDFHSAKEALENGISMVHQELNLVLQRSVMDNMWLGRYPTKGMFVDQDKMYRETKAIFDELDIDIDPRARVGTLSVSQMQMIEIAKAFSYNAKIVIMDEPTSSLTEKEVNHLFTIIRKLKERGCGIVYISHKMEEIFQLCDEVTVLRDGQWIATEPLAGLTMDKIIAMMVGRSLNQRFPDKENKPGEVILEVRNLTSLRQPSIRDVSFDLHKGEILGIAGLVGAKRTDIVETLFGIREKSAGTITLHGKKINNHNANEAINHGFALVTEERRSTGIYAYLDIGFNSLISNIRNYKNKVGLLDNSRMKSDTQWVIDSMRVKTPGHRTQIGSLSGGNQQKVIIGRWLLTQPEILMLDEPTRGIDVGAKFEIYQLIAELAKKGKGIIIISSEMPELLGITDRILVMSNGLVSGIVDTKTTTQSEILRLASLHL.

ABC transporter domains lie at 14–249 (LEMS…VGRS) and 264–506 (VILE…SLHL). 46 to 53 (GENGAGKS) is an ATP binding site.

This sequence belongs to the ABC transporter superfamily. Galactose/methyl galactoside importer (TC 3.A.1.2.3) family. In terms of assembly, the complex is composed of one ATP-binding protein (MglA), two transmembrane proteins (MglC) and a solute-binding protein (MglB).

The protein resides in the cell inner membrane. The enzyme catalyses D-galactose(out) + ATP + H2O = D-galactose(in) + ADP + phosphate + H(+). It carries out the reaction methyl beta-D-galactoside(out) + ATP + H2O = methyl beta-D-galactoside(in) + ADP + phosphate + H(+). Its function is as follows. Part of the ABC transporter complex MglABC involved in galactose/methyl galactoside import. Responsible for energy coupling to the transport system. This chain is Galactose/methyl galactoside import ATP-binding protein MglA, found in Escherichia coli O6:K15:H31 (strain 536 / UPEC).